Here is a 339-residue protein sequence, read N- to C-terminus: MYSIYDFKYPSDWIEPTADDKCIYDCYKEVINYKLLDENKQTFQYYYGTLSSTINFYPLCNYEQLVIACRFLTVGYLIDDFLESNLVDSETSNLMSKKIENILIDGEYLDQSNISNIEKYTMFFRGKARQFVGDKINIFNQFIKFFVEWINSINPFNKAINLNNYDSYNFFKKVNSGTYVTLSMAMLLNPNTKVDTNIWMNPRFERFVCNGAYQMSAFNDCASYAKEVRSNCHLTNPLYFLQKEIGSFDQVYKLILNFNNKIVNEICKDEELLLKECPDDQKDDLKYLTRSMKLILGGNYSWSLKCTRFNDIDSPFIEQRSINPDVIAYENIVDKIIKL.

The DDxx(x)D/E motif signature appears at 79-84 (DDFLES). The NDxxSxxxD/E motif signature appears at 219–227 (NDCASYAKE).

The protein belongs to the terpene synthase family.

It catalyses the reaction (2E,6E)-farnesyl diphosphate = (-)-beta-barbatene + diphosphate. Functionally, terpene synthase that converts its substrate farnesyl diphosphate (FPP) into the sesquiterpene beta-barbatene. The protein is Terpene synthase 7 of Dictyostelium discoideum (Social amoeba).